Consider the following 633-residue polypeptide: Kelch repeat and BTB domain-containing protein 11 (633 aa).

The interval 1–118 (MENSVAPFVL…EDPPSRHEHA (118 aa)) is disordered. Over residues 35-60 (STAQTPCSLSASLCFSSGDDSPPQSR) the composition is skewed to polar residues. The span at 61–73 (ASAAEGSEASPPS) shows a compositional bias: low complexity. 6 positions are modified to phosphoserine: Ser70, Ser73, Ser92, Ser95, Ser107, and Ser113. A BTB domain is found at 146–206 (PDLVIEVAGR…AYSGRMAGVR (61 aa)). 4 Kelch repeats span residues 317 to 365 (RPQS…VLFN), 366 to 418 (YLFL…ALDG), 419 to 463 (HLYA…TCNG), and 465 to 506 (IYVS…ALDG).

This chain is Kelch repeat and BTB domain-containing protein 11 (Kbtbd11), found in Mus musculus (Mouse).